The sequence spans 626 residues: DNA mismatch repair protein MutL (626 aa).

It belongs to the DNA mismatch repair MutL/HexB family.

This protein is involved in the repair of mismatches in DNA. It is required for dam-dependent methyl-directed DNA mismatch repair. May act as a 'molecular matchmaker', a protein that promotes the formation of a stable complex between two or more DNA-binding proteins in an ATP-dependent manner without itself being part of a final effector complex. The protein is DNA mismatch repair protein MutL of Chlorobium luteolum (strain DSM 273 / BCRC 81028 / 2530) (Pelodictyon luteolum).